Here is a 137-residue protein sequence, read N- to C-terminus: uncharacterized protein (137 aa).

This is an uncharacterized protein from Homo sapiens (Human).